The sequence spans 120 residues: Large ribosomal subunit protein bL17 (120 aa).

Belongs to the bacterial ribosomal protein bL17 family. As to quaternary structure, part of the 50S ribosomal subunit. Contacts protein L32.

This is Large ribosomal subunit protein bL17 from Geobacillus kaustophilus (strain HTA426).